The sequence spans 631 residues: MSLIEGDSIYNLFQTQDLGIDFASSIVPDSPNKFKKNANVFNNFQQQQQQIQQQNKQSNGLIYNNNNNNNNNNNNNNNNSSSSNNNNNSSSSNNNNNSNNNNQNHNNNNNNQNHNNIQHNNAQSQVYINHNSNGSQQEEQLFSIYLQPEKENELNNSYHDNVNNNNNNNNNNNNNNNNINLNHAQQQQQQHHLPHGQPHNNNNNNQFYQIKNPMEEIYSSNGIVPNQEPNKKVEYMNEPIKQNHYNIVPESIFDVPFGVSSQTMLNVPSTNNANNNNNNNNNNNNNNKNINFKQPIQPNQLIPIPPHSNQNNNISLNNNNSNSNSNPNNNNNNSNNISTQINNLNNNINNQNNQLNGSNNGKKKEEDKSIKKRKFISSTPVKGENGGTTLIPTTDGGFNMDEERHQKRQRRLVKNREAAQLFRQRQKAYIQDLEKKVSDLTGTNSEFRARVELLNSENKLIREQLLYLRNFVTQAVSFSFPKGGSNGTNSPSGVADQFLNSILPPGLNSPLPQGILPAGMNLQNPMIMSAIAEAASKNSTFRQNIQGNLLGTPIPSPQSSLTSNSGNNSPNKPLNNNNNNNNINNNNNNNPSSPNNNLNNNNNISPNSSTSHQVPYLPQNTPPQQSTPNQR.

Residues 35–62 adopt a coiled-coil conformation; the sequence is KKNANVFNNFQQQQQQIQQQNKQSNGLI. Disordered stretches follow at residues 46–117, 154–207, and 264–406; these read QQQQ…HNNI, LNNS…NNQF, and MLNV…ERHQ. 2 stretches are compositionally biased toward low complexity: residues 155–206 and 271–360; these read NNSY…NNNQ and NNAN…GSNN. Positions 328 to 366 form a coiled coil; the sequence is NNNNNNSNNISTQINNLNNNINNQNNQLNGSNNGKKKEE. The region spanning 405 to 468 is the bZIP domain; sequence HQKRQRRLVK…KLIREQLLYL (64 aa). The interval 407–427 is basic motif; sequence KRQRRLVKNREAAQLFRQRQK. Positions 433–440 are leucine-zipper; that stretch reads LEKKVSDL. Residues 546–631 form a disordered region; that stretch reads QGNLLGTPIP…PPQQSTPNQR (86 aa). Low complexity-rich tracts occupy residues 563–609 and 618–631; these read SNSG…PNSS and PQNTPPQQSTPNQR.

The protein belongs to the bZIP family.

It is found in the nucleus. Its function is as follows. Probable transcriptional regulator. The protein is Probable basic-leucine zipper transcription factor F (bzpF) of Dictyostelium discoideum (Social amoeba).